We begin with the raw amino-acid sequence, 434 residues long: Enolase (434 aa).

Gln-166 is a (2R)-2-phosphoglycerate binding site. Glu-208 functions as the Proton donor in the catalytic mechanism. The Mg(2+) site is built by Asp-245, Glu-290, and Asp-317. Residues Lys-342, Arg-371, Ser-372, and Lys-393 each contribute to the (2R)-2-phosphoglycerate site. Lys-342 (proton acceptor) is an active-site residue.

This sequence belongs to the enolase family. The cofactor is Mg(2+).

The protein resides in the cytoplasm. It localises to the secreted. The protein localises to the cell surface. It catalyses the reaction (2R)-2-phosphoglycerate = phosphoenolpyruvate + H2O. The protein operates within carbohydrate degradation; glycolysis; pyruvate from D-glyceraldehyde 3-phosphate: step 4/5. In terms of biological role, catalyzes the reversible conversion of 2-phosphoglycerate (2-PG) into phosphoenolpyruvate (PEP). It is essential for the degradation of carbohydrates via glycolysis. In Caldicellulosiruptor bescii (strain ATCC BAA-1888 / DSM 6725 / KCTC 15123 / Z-1320) (Anaerocellum thermophilum), this protein is Enolase.